A 513-amino-acid chain; its full sequence is Noroxomaritidine synthase (513 aa).

The helical transmembrane segment at H14–A34 threads the bilayer. Residue C458 coordinates heme.

The protein belongs to the cytochrome P450 family. Heme is required as a cofactor.

The protein resides in the membrane. The catalysed reaction is 4'-O-methylnorbelladine + reduced [NADPH--hemoprotein reductase] + O2 = (10bS,4aR)-noroxomaritidine + oxidized [NADPH--hemoprotein reductase] + 2 H2O + H(+). It catalyses the reaction 4'-O-methylnorbelladine + reduced [NADPH--hemoprotein reductase] + O2 = (10bR,4aS)-noroxomaritidine + oxidized [NADPH--hemoprotein reductase] + 2 H2O + H(+). Its pathway is alkaloid biosynthesis. Cytochrome P450 that catalyzes an intramolecular para-para' C-C phenol coupling of 4'-O-methylnorbelladine in alkaloids biosynthesis, including haemanthamine- and crinamine-type alkaloids, promising anticancer agents. Catalyzes the formation of (10bR,4aS)-noroxomaritidine and (10bS,4aR)-noroxomaritidine from 4'-O-methylnorbelladine. Also produces N-demethylnarwedine as a minor product. Involved in the biosynthesis of haemanthamine. Can also use 4'-O-methyl-N-methylnorbelladine, (S)- and (R)-coclaurine as substrates, but not 3'-O-methylnorbelladine, 3',4'-O-dimethylnorbelladine, norbelladine, haemanthamine, (10bS,4aR)- or (10bR,4aS)-noroxomaritidine, isovanillin or tyramine. In Narcissus aff. pseudonarcissus MK-2014 (Daffodil), this protein is Noroxomaritidine synthase.